A 134-amino-acid polypeptide reads, in one-letter code: L-ectoine synthase (134 aa).

This sequence belongs to the ectoine synthase family.

It carries out the reaction (2S)-4-acetamido-2-aminobutanoate = L-ectoine + H2O. Its pathway is amine and polyamine biosynthesis; ectoine biosynthesis; L-ectoine from L-aspartate 4-semialdehyde: step 3/3. Functionally, catalyzes the circularization of gamma-N-acetyl-alpha,gamma-diaminobutyric acid (ADABA) to ectoine (1,4,5,6-tetrahydro-2-methyl-4-pyrimidine carboxylic acid), which is an excellent osmoprotectant. The chain is L-ectoine synthase from Thermobifida fusca (strain YX).